The primary structure comprises 746 residues: GTPase-activating protein GYP7 (746 aa).

Residues serine 265 and serine 339 each carry the phosphoserine modification. Residues 385 to 633 enclose the Rab-GAP TBC domain; it reads LENDSLRGKV…HIWENFWTFY (249 aa). The tract at residues 470-505 is disordered; sequence TIDGLPPPPQQLPANENNSTSPESANDESDDADDGV. A compositionally biased stretch (polar residues) spans 481-491; it reads LPANENNSTSP.

It localises to the cytoplasm. Its function is as follows. GTPase-activating protein (GAP) that most effectively accelerates the intrinsic GTPase activity of Ypt/Rab-type GTPase YPT7 involved in vacuole docking and fusion. It is also active, but to a lesser extent, on YPT31, YPT32, YPT1, YPT6 and SEC4. Provides a catalytic arginine (arginine finger) in trans to accelerate the GTP hydrolysis rate of the substrate GTPase. In Saccharomyces cerevisiae (strain ATCC 204508 / S288c) (Baker's yeast), this protein is GTPase-activating protein GYP7 (GYP7).